The following is a 71-amino-acid chain: Large ribosomal subunit protein uL29 (71 aa).

This sequence belongs to the universal ribosomal protein uL29 family.

This is Large ribosomal subunit protein uL29 from Rickettsia canadensis (strain McKiel).